The following is a 688-amino-acid chain: Glycine--tRNA ligase beta subunit (688 aa).

Belongs to the class-II aminoacyl-tRNA synthetase family. In terms of assembly, tetramer of two alpha and two beta subunits.

It is found in the cytoplasm. It carries out the reaction tRNA(Gly) + glycine + ATP = glycyl-tRNA(Gly) + AMP + diphosphate. This Psychromonas ingrahamii (strain DSM 17664 / CCUG 51855 / 37) protein is Glycine--tRNA ligase beta subunit.